A 471-amino-acid chain; its full sequence is 3-isopropylmalate dehydratase large subunit (471 aa).

3 residues coordinate [4Fe-4S] cluster: C349, C410, and C413.

The protein belongs to the aconitase/IPM isomerase family. LeuC type 1 subfamily. In terms of assembly, heterodimer of LeuC and LeuD. It depends on [4Fe-4S] cluster as a cofactor.

The enzyme catalyses (2R,3S)-3-isopropylmalate = (2S)-2-isopropylmalate. It functions in the pathway amino-acid biosynthesis; L-leucine biosynthesis; L-leucine from 3-methyl-2-oxobutanoate: step 2/4. In terms of biological role, catalyzes the isomerization between 2-isopropylmalate and 3-isopropylmalate, via the formation of 2-isopropylmaleate. In Chromobacterium violaceum (strain ATCC 12472 / DSM 30191 / JCM 1249 / CCUG 213 / NBRC 12614 / NCIMB 9131 / NCTC 9757 / MK), this protein is 3-isopropylmalate dehydratase large subunit.